A 72-amino-acid polypeptide reads, in one-letter code: Translation initiation factor IF-1 (72 aa).

The S1-like domain maps to 1 to 72; the sequence is MAKEEMLEFP…TKGRINYRFK (72 aa).

Belongs to the IF-1 family. In terms of assembly, component of the 30S ribosomal translation pre-initiation complex which assembles on the 30S ribosome in the order IF-2 and IF-3, IF-1 and N-formylmethionyl-tRNA(fMet); mRNA recruitment can occur at any time during PIC assembly.

The protein resides in the cytoplasm. In terms of biological role, one of the essential components for the initiation of protein synthesis. Stabilizes the binding of IF-2 and IF-3 on the 30S subunit to which N-formylmethionyl-tRNA(fMet) subsequently binds. Helps modulate mRNA selection, yielding the 30S pre-initiation complex (PIC). Upon addition of the 50S ribosomal subunit IF-1, IF-2 and IF-3 are released leaving the mature 70S translation initiation complex. This Paracoccus denitrificans (strain Pd 1222) protein is Translation initiation factor IF-1.